The following is a 261-amino-acid chain: Carbonic anhydrase 1 (261 aa).

The residue at position 2 (Ala2) is an N-acetylalanine. In terms of domain architecture, Alpha-carbonic anhydrase spans 4–261 (PDWGYDDKNG…LKGRTVRASF (258 aa)). The Proton donor/acceptor role is filled by His65. His95, His97, and His120 together coordinate Zn(2+). Residues Thr200 and 200 to 201 (TH) each bind substrate. The interval 238–261 (NPVPIQRNNRPTQPLKGRTVRASF) is disordered.

The protein belongs to the alpha-carbonic anhydrase family. Requires Zn(2+) as cofactor.

It is found in the cytoplasm. It catalyses the reaction hydrogencarbonate + H(+) = CO2 + H2O. It carries out the reaction urea = cyanamide + H2O. Inhibited by acetazolamide. Functionally, catalyzes the reversible hydration of carbon dioxide. Can hydrate cyanamide to urea. The sequence is that of Carbonic anhydrase 1 (CA1) from Macaca mulatta (Rhesus macaque).